Here is a 402-residue protein sequence, read N- to C-terminus: tRNA(Met) cytidine acetate ligase (402 aa).

Residues 7-20, Gly-102, Asn-171, and Arg-196 contribute to the ATP site; that span reads IAEY…HIHH.

Belongs to the TmcAL family.

The protein resides in the cytoplasm. The catalysed reaction is cytidine(34) in elongator tRNA(Met) + acetate + ATP = N(4)-acetylcytidine(34) in elongator tRNA(Met) + AMP + diphosphate. In terms of biological role, catalyzes the formation of N(4)-acetylcytidine (ac(4)C) at the wobble position of elongator tRNA(Met), using acetate and ATP as substrates. First activates an acetate ion to form acetyladenylate (Ac-AMP) and then transfers the acetyl group to tRNA to form ac(4)C34. The protein is tRNA(Met) cytidine acetate ligase of Clostridium acetobutylicum (strain ATCC 824 / DSM 792 / JCM 1419 / IAM 19013 / LMG 5710 / NBRC 13948 / NRRL B-527 / VKM B-1787 / 2291 / W).